The following is a 563-amino-acid chain: Chaperonin GroEL 1 (563 aa).

ATP is bound by residues 29 to 32 (TIGP), 86 to 90 (DGTTT), G413, and D492. The disordered stretch occupies residues 520-541 (DKPEPPSAPGAEGGDPMGGMGG). Over residues 530–541 (AEGGDPMGGMGG) the composition is skewed to gly residues.

This sequence belongs to the chaperonin (HSP60) family. Forms a cylinder of 14 subunits composed of two heptameric rings stacked back-to-back. Interacts with the co-chaperonin GroES.

The protein resides in the cytoplasm. It carries out the reaction ATP + H2O + a folded polypeptide = ADP + phosphate + an unfolded polypeptide.. In terms of biological role, together with its co-chaperonin GroES, plays an essential role in assisting protein folding. The GroEL-GroES system forms a nano-cage that allows encapsulation of the non-native substrate proteins and provides a physical environment optimized to promote and accelerate protein folding. In Prochlorococcus marinus (strain NATL1A), this protein is Chaperonin GroEL 1.